The following is a 460-amino-acid chain: MSKKKELLWQSRFSEPFDREALLFSSSVDVDKELYQEDITGSIAHVTMLSEEAIIPAEEARLIIEGLQEIEEEISTGSLVPHWEDEDIHTVIENRLKEKIGPIAGKIHSGRSRNDQVATDTRLYLKRSIEEIRQALKELKTVLVDKAEAYRRTIIFGYTHLQRAQPISAGHYYLAYFNMFDRDNQRLQDLYKRVDISPLGAAAFAGSTLALNAERSRDLLEFEGLFHNSIDAVSDRDIIIEFVSACSIIMMHLSRFAEDLILWSSYEFNYLEISDAFATGSSIMPQKKNADIAELVRGKTGRVYGDLMAMLTIMKGLPLSYNRDMQEDKPPLFDASKTTRSSVRIFTKMLENTSIKENRLSSLVAKDLSLATEIAEYLVQKNMPFRDAHRVTGKIVSHVIESGTTLPDMTLETYRTFSDLFDEDLYDALKPEASVNAKKTHGSTSFASVEEQIVSARTRI.

This sequence belongs to the lyase 1 family. Argininosuccinate lyase subfamily.

It is found in the cytoplasm. It catalyses the reaction 2-(N(omega)-L-arginino)succinate = fumarate + L-arginine. It participates in amino-acid biosynthesis; L-arginine biosynthesis; L-arginine from L-ornithine and carbamoyl phosphate: step 3/3. This Prosthecochloris aestuarii (strain DSM 271 / SK 413) protein is Argininosuccinate lyase.